The primary structure comprises 339 residues: Lipoate--protein ligase (339 aa).

Positions 31 to 221 (FLDDDILFPY…QLLQIETISQ (191 aa)) constitute a BPL/LPL catalytic domain. Residues Arg73, 78 to 81 (GAVY), Lys135, and Ala139 each bind ATP. Lys135 is a binding site for (R)-lipoate.

The protein belongs to the LplA family.

It carries out the reaction L-lysyl-[lipoyl-carrier protein] + (R)-lipoate + ATP = N(6)-[(R)-lipoyl]-L-lysyl-[lipoyl-carrier protein] + AMP + diphosphate + H(+). The protein operates within protein modification; protein lipoylation via exogenous pathway; protein N(6)-(lipoyl)lysine from lipoate: step 1/2. It participates in protein modification; protein lipoylation via exogenous pathway; protein N(6)-(lipoyl)lysine from lipoate: step 2/2. Its function is as follows. Catalyzes specifically the lipoylation of GcvH-L (SpyM50867), likely via the ATP-dependent activation of lipoate to lipoyl-AMP and the transfer of the activated lipoyl onto the lipoyl domain of the target protein. The sequence is that of Lipoate--protein ligase from Streptococcus pyogenes serotype M5 (strain Manfredo).